The chain runs to 969 residues: Leucine--tRNA ligase (969 aa).

The tract at residues 1 to 23 (MTESPTTSPATGSGAAAPDSDAP) is disordered. Positions 78–89 (PYPSGEGLHVGH) match the 'HIGH' region motif. The short motif at 737 to 741 (KIGKS) is the 'KMSKS' region element. Lysine 740 contributes to the ATP binding site.

This sequence belongs to the class-I aminoacyl-tRNA synthetase family.

The protein resides in the cytoplasm. The enzyme catalyses tRNA(Leu) + L-leucine + ATP = L-leucyl-tRNA(Leu) + AMP + diphosphate. The protein is Leucine--tRNA ligase of Mycobacterium avium (strain 104).